We begin with the raw amino-acid sequence, 202 residues long: MFTELRSKLSPPRARAGAVRPGFGERPDVDASAHFSFCQTLLEHTVSAENIPCHLPRTPGTSLTWHDSRSQRASSSRPIKLLQQPGSEIPQARLYSDHYGLYHTSPSLGGLTRPVVLWSQQDVCKWLKKHCPHNYLVYVEAFSQHAITGRALLRLNADKLQRMGLTQEAQRQEVLQQVLHLQVREEGRSLKLLSQASFGNMS.

A disordered region spans residues 1–22 (MFTELRSKLSPPRARAGAVRPG). One can recognise an SAM domain in the interval 118-184 (WSQQDVCKWL…LQQVLHLQVR (67 aa)).

This chain is Sterile alpha motif domain-containing protein 10, found in Mus musculus (Mouse).